The following is a 316-amino-acid chain: Pantothenate kinase (316 aa).

An ATP-binding site is contributed by 95 to 102; that stretch reads GSVAVGKS.

This sequence belongs to the prokaryotic pantothenate kinase family.

It is found in the cytoplasm. It carries out the reaction (R)-pantothenate + ATP = (R)-4'-phosphopantothenate + ADP + H(+). It participates in cofactor biosynthesis; coenzyme A biosynthesis; CoA from (R)-pantothenate: step 1/5. In Enterobacter sp. (strain 638), this protein is Pantothenate kinase.